Reading from the N-terminus, the 278-residue chain is Non-homologous end joining protein Ku (278 aa).

The region spanning 9-172 is the Ku domain; it reads ISFGLVNIPV…MHFAQELVDV (164 aa). A disordered region spans residues 255–278; sequence NQTGAGAKKKPAKTAKRGKSRKAA. Over residues 261 to 278 the composition is skewed to basic residues; the sequence is AKKKPAKTAKRGKSRKAA.

It belongs to the prokaryotic Ku family. In terms of assembly, homodimer. Interacts with LigD.

With LigD forms a non-homologous end joining (NHEJ) DNA repair enzyme, which repairs dsDNA breaks with reduced fidelity. Binds linear dsDNA with 5'- and 3'- overhangs but not closed circular dsDNA nor ssDNA. Recruits and stimulates the ligase activity of LigD. The protein is Non-homologous end joining protein Ku of Opitutus terrae (strain DSM 11246 / JCM 15787 / PB90-1).